A 987-amino-acid polypeptide reads, in one-letter code: Valine--tRNA ligase (987 aa).

The 'HIGH' region signature appears at 45 to 55; that stretch reads PNVTGSLHMGH. The 'KMSKS' region signature appears at 634-638; sequence KMSKS. Position 637 (Lys637) interacts with ATP. Residues 917 to 985 are a coiled coil; the sequence is VIDIGAEKAR…LSAALARLSE (69 aa).

This sequence belongs to the class-I aminoacyl-tRNA synthetase family. ValS type 1 subfamily. Monomer.

The protein localises to the cytoplasm. It carries out the reaction tRNA(Val) + L-valine + ATP = L-valyl-tRNA(Val) + AMP + diphosphate. In terms of biological role, catalyzes the attachment of valine to tRNA(Val). As ValRS can inadvertently accommodate and process structurally similar amino acids such as threonine, to avoid such errors, it has a 'posttransfer' editing activity that hydrolyzes mischarged Thr-tRNA(Val) in a tRNA-dependent manner. The chain is Valine--tRNA ligase from Cereibacter sphaeroides (strain ATCC 17023 / DSM 158 / JCM 6121 / CCUG 31486 / LMG 2827 / NBRC 12203 / NCIMB 8253 / ATH 2.4.1.) (Rhodobacter sphaeroides).